The primary structure comprises 130 residues: Granulin (130 aa).

Positions 1-26 (MNYSKIFIFGIISLILMALFSSTVES) are cleaved as a signal peptide. 2 disulfides stabilise this stretch: cysteine 67/cysteine 79 and cysteine 73/cysteine 89.

The protein belongs to the granulin family. Granulins are disulfide bridged.

The protein resides in the secreted. This Dictyostelium discoideum (Social amoeba) protein is Granulin (grn).